We begin with the raw amino-acid sequence, 375 residues long: Outer membrane porin OmpD (375 aa).

An N-terminal signal peptide occupies residues 1–34 (MRKHAKKIIRIIKMKLKLVAVAVTSLLAAGVVNA).

Belongs to the Gram-negative porin family. As to quaternary structure, homotrimer. Mixed heterotrimers with other porins are also probable.

Its subcellular location is the cell outer membrane. Forms pores that allow passive diffusion of small molecules across the outer membrane. The protein is Outer membrane porin OmpD of Salmonella typhimurium (strain SL1344).